The chain runs to 132 residues: MTMTDPVADMLTRLRNANSAYHDTVSMPSSKLKTRVAEILKAEGYIQDWREEEAEVGKKLTIDLKFGPQRERAIAGLRRISKPGLRVYAKSTNLPHVLGGLGIAILSTSSGLLTNQQAAKKGVGGEVLAYVW.

This sequence belongs to the universal ribosomal protein uS8 family. Part of the 30S ribosomal subunit. Contacts proteins S5 and S12.

Its function is as follows. One of the primary rRNA binding proteins, it binds directly to 16S rRNA central domain where it helps coordinate assembly of the platform of the 30S subunit. The protein is Small ribosomal subunit protein uS8 of Micrococcus luteus (strain ATCC 4698 / DSM 20030 / JCM 1464 / CCM 169 / CCUG 5858 / IAM 1056 / NBRC 3333 / NCIMB 9278 / NCTC 2665 / VKM Ac-2230) (Micrococcus lysodeikticus).